Reading from the N-terminus, the 333-residue chain is GDP-mannose transporter GONST1 (333 aa).

9 helical membrane passes run 33 to 55, 62 to 84, 99 to 121, 153 to 170, 174 to 196, 216 to 238, 253 to 275, 282 to 304, and 308 to 325; these read ALLS…KFVL, AGIF…LSLM, VWFP…LKYI, VWAA…GGIT, FNAV…SLTL, SMVL…FFNE, FWMV…MWFL, TYSL…LFNV, and LQNS…VVFA.

This sequence belongs to the nucleotide-sugar transporter family. GDP-Mannose:GMP antiporter (GMA) (TC 2.A.7.13) subfamily.

The protein localises to the golgi apparatus membrane. Its function is as follows. Involved in the import of GDP-mannose from the cytoplasm into the Golgi lumen. Required for the luminal synthesis of a variety of plant cell surface components. Is required for the correct mannosylation of the glycosylinositol phosphoceramides (GIPC). Can indifferently transport GDP-mannose, GDP-Glucose, GDP-Fucose or GDP-Galactose in vitro. In Arabidopsis thaliana (Mouse-ear cress), this protein is GDP-mannose transporter GONST1.